The following is a 477-amino-acid chain: Homeobox protein Meis2 (477 aa).

The segment at 71–191 (DALKRDKDAI…KMPIDLVIDE (121 aa)) is required for interaction with PBX1. The MEIS N-terminal domain occupies 110–193 (GGDVCSSDSF…PIDLVIDERD (84 aa)). Residues 193-203 (DGSSKSDHEEL) show a composition bias toward basic and acidic residues. A disordered region spans residues 193-283 (DGSSKSDHEE…KKRQKKRGIF (91 aa)). Composition is skewed to polar residues over residues 204-217 (SGSS…NPSS) and 239-251 (GHAS…SSEQ). Residues 276–338 (RQKKRGIFPK…NARRRIVQPM (63 aa)) constitute a DNA-binding region (homeobox; TALE-type). Positions 299–333 (LTHPYPSEEQKKQLAQDTGLTILQVNNWFINARRR) are interaction with DNA. Residues 340-477 (DQSNRAGFLL…GGQVMDIHAQ (138 aa)) form a transcriptional activation domain region.

This sequence belongs to the TALE/MEIS homeobox family. In terms of assembly, monomer and homodimer. Heterodimer with HOXB13. Isoform 2 interacts with TLX1. Isoform 3 interacts with HOXA13 and PBX1 isoform PBX1b. Isoform 4 interacts with SP1, SP3 and KLF4. Isoform 4 and isoform 5 interact with PBX1 isoform PBX1a; the interaction partially relieves MEIS2 autoinhibition. Isoform 3 also known as MEIS2b is part of a PDX1:PBX1b:Meis2B complex; Meis2B is recruited by PBX1b and can be replaced by isoform 4 in a small fraction of complexes. Can form trimeric complexes including HOXB8 and PBX2 or PBX3. As to expression, expressed in various tissues. Expressed at high level in the lymphoid organs of hematopoietic tissues. Also expressed in some regions of the brain, such as the putamen.

The protein resides in the nucleus. It is found in the cytoplasm. Its subcellular location is the perinuclear region. Its function is as follows. Involved in transcriptional regulation. Binds to HOX or PBX proteins to form dimers, or to a DNA-bound dimer of PBX and HOX proteins and thought to have a role in stabilization of the homeoprotein-DNA complex. Isoform 3 is required for the activity of a PDX1:PBX1b:MEIS2b complex in pancreatic acinar cells involved in the transcriptional activation of the ELA1 enhancer; the complex binds to the enhancer B element and cooperates with the transcription factor 1 complex (PTF1) bound to the enhancer A element; MEIS2 is not involved in complex DNA-binding. Probably in complex with PBX1, is involved in transcriptional regulation by KLF4. Isoform 3 and isoform 4 can bind to a EPHA8 promoter sequence containing the DNA motif 5'-CGGTCA-3'; in cooperation with a PBX protein (such as PBX2) is proposed to be involved in the transcriptional activation of EPHA8 in the developing midbrain. May be involved in regulation of myeloid differentiation. Can bind to the DNA sequence 5'-TGACAG-3'in the activator ACT sequence of the D(1A) dopamine receptor (DRD1) promoter and activate DRD1 transcription; isoform 5 cannot activate DRD1 transcription. This chain is Homeobox protein Meis2 (MEIS2), found in Homo sapiens (Human).